The sequence spans 436 residues: Phosphomethylpyrimidine synthase (436 aa).

Substrate is bound by residues Asn-69, Met-98, Tyr-127, His-163, 185 to 187, 226 to 229, and Glu-265; these read SRG and DACR. His-269 contributes to the Zn(2+) binding site. Residue Tyr-292 coordinates substrate. His-333 serves as a coordination point for Zn(2+). Positions 409, 412, and 416 each coordinate [4Fe-4S] cluster.

This sequence belongs to the ThiC family. [4Fe-4S] cluster serves as cofactor.

The enzyme catalyses 5-amino-1-(5-phospho-beta-D-ribosyl)imidazole + S-adenosyl-L-methionine = 4-amino-2-methyl-5-(phosphooxymethyl)pyrimidine + CO + 5'-deoxyadenosine + formate + L-methionine + 3 H(+). Its pathway is cofactor biosynthesis; thiamine diphosphate biosynthesis. Its function is as follows. Catalyzes the synthesis of the hydroxymethylpyrimidine phosphate (HMP-P) moiety of thiamine from aminoimidazole ribotide (AIR) in a radical S-adenosyl-L-methionine (SAM)-dependent reaction. This is Phosphomethylpyrimidine synthase from Clostridium acetobutylicum (strain ATCC 824 / DSM 792 / JCM 1419 / IAM 19013 / LMG 5710 / NBRC 13948 / NRRL B-527 / VKM B-1787 / 2291 / W).